Consider the following 724-residue polypeptide: Probable metal-nicotianamine transporter YSL13 (724 aa).

The disordered stretch occupies residues 1–54 (MATVPTPSEAHGGATPTAADVEMVEASELRRRGKPSGDRATGPSRDGAAAAAEE). 14 helical membrane passes run 80 to 100 (AFVV…KLNL), 103 to 123 (GIIP…VRLW), 148 to 168 (CVVA…ILSM), 190 to 210 (LGWI…GLVP), 252 to 272 (LGIF…YTAT), 310 to 330 (IVNV…WPLI), 355 to 375 (VFIA…KMII), 423 to 443 (IPWY…IGTV), 455 to 475 (ILVA…GTGL), 487 to 507 (LAIF…LAGL), 541 to 561 (FVSQ…VFWL), 603 to 623 (LNLC…RDLV), 640 to 660 (FYIG…LFVW), and 675 to 695 (VASG…VLAL).

Belongs to the YSL (TC 2.A.67.2) family. In terms of tissue distribution, expressed in leaves and at low levels in root cortex.

It localises to the membrane. In terms of biological role, may be involved in the transport of nicotianamine-chelated metals. The protein is Probable metal-nicotianamine transporter YSL13 (YSL13) of Oryza sativa subsp. japonica (Rice).